The chain runs to 372 residues: 4-hydroxy-3-methylbut-2-en-1-yl diphosphate synthase (flavodoxin) (372 aa).

4 residues coordinate [4Fe-4S] cluster: cysteine 270, cysteine 273, cysteine 305, and glutamate 312.

The protein belongs to the IspG family. The cofactor is [4Fe-4S] cluster.

The enzyme catalyses (2E)-4-hydroxy-3-methylbut-2-enyl diphosphate + oxidized [flavodoxin] + H2O + 2 H(+) = 2-C-methyl-D-erythritol 2,4-cyclic diphosphate + reduced [flavodoxin]. It participates in isoprenoid biosynthesis; isopentenyl diphosphate biosynthesis via DXP pathway; isopentenyl diphosphate from 1-deoxy-D-xylulose 5-phosphate: step 5/6. Converts 2C-methyl-D-erythritol 2,4-cyclodiphosphate (ME-2,4cPP) into 1-hydroxy-2-methyl-2-(E)-butenyl 4-diphosphate. The protein is 4-hydroxy-3-methylbut-2-en-1-yl diphosphate synthase (flavodoxin) of Alteromonas mediterranea (strain DSM 17117 / CIP 110805 / LMG 28347 / Deep ecotype).